A 514-amino-acid polypeptide reads, in one-letter code: Maturase K (514 aa).

This sequence belongs to the intron maturase 2 family. MatK subfamily.

It localises to the plastid. It is found in the chloroplast. Its function is as follows. Usually encoded in the trnK tRNA gene intron. Probably assists in splicing its own and other chloroplast group II introns. The protein is Maturase K of Zamia integrifolia (Coontie).